Reading from the N-terminus, the 132-residue chain is uncharacterized protein (132 aa).

Helical transmembrane passes span 18-38, 50-70, and 71-91; these read MLFIFMPFAITSFFAFLFIGI, IIYFFIFAFGFVLPDLPGVFI, and VVPLWAVTIIHGFKVRPLYLI.

It localises to the cell membrane. This is an uncharacterized protein from Bacillus subtilis (strain 168).